Here is a 503-residue protein sequence, read N- to C-terminus: MAGLSDLELRRELQALGFQPGPITDTTRDVYRNKLRRLRGEARLRDEERLREEARPRGEERLREEARLREDAPLRARPAAASPRAEPWLSQPASGSAYATPGAYGDIRPSAASWVGSRGLAYPARPAQLRRRASVRGSSEEDEDARTPDRATQGPGLAARRWWAASPAPARLPSSLLGPDPRPGLRATRAGPAGAARARPEVGRRLERWLSRLLLWASLGLLLVFLGILWVKMGKPSAPQEAEDNMKLLPVDCERKTDEFCQAKQKAALLELLHELYNFLAIQAGNFECGNPENLKSKCIPVMEAQEYIANVTSSSSAKFEAALTWILSSNKDVGIWLKGEDQSELVTTVDKVVCLESAHPRMGVGCRLSRALLTAVTNVLIFFWCLAFLWGLLILLKYRWRKLEEEEQAMYEMVKKIIDVVQDHYVDWEQDMERYPYVGILHVRDSLIPPQSRRRMKRVWDRAVEFLASNESRIQTESHRVAGEDMLVWRWTKPSSFSDSER.

Ala-2 carries the post-translational modification N-acetylalanine. In terms of domain architecture, LEM spans 2-42 (AGLSDLELRRELQALGFQPGPITDTTRDVYRNKLRRLRGEA). The segment covering 42-74 (ARLRDEERLREEARPRGEERLREEARLREDAPL) has biased composition (basic and acidic residues). 2 disordered regions span residues 42-97 (ARLR…SGSA) and 127-157 (AQLRRRASVRGSSEEDEDARTPDRATQGPGL). A required for nuclear retention and interaction with LMNA isoform C region spans residues 74–130 (LRARPAAASPRAEPWLSQPASGSAYATPGAYGDIRPSAASWVGSRGLAYPARPAQLR). Positions 75 to 87 (RARPAAASPRAEP) are enriched in low complexity. Residues Ser-166 and Ser-175 each carry the phosphoserine modification. A disordered region spans residues 172-198 (LPSSLLGPDPRPGLRATRAGPAGAARA). The segment covering 184 to 197 (GLRATRAGPAGAAR) has biased composition (low complexity). The next 2 membrane-spanning stretches (helical) occupy residues 213 to 233 (LLLWASLGLLLVFLGILWVKM) and 377 to 397 (VTNVLIFFWCLAFLWGLLILL). Positions 395-503 (ILLKYRWRKL…KPSSFSDSER (109 aa)) are winged-Helix (WH). Residues Ser-497, Ser-499, and Ser-501 each carry the phosphoserine modification.

As to quaternary structure, interacts (via N-terminus) with LMNA isoform C (via C-terminus) (in vitro). Interacts (via LEM domain) with BANF1. Interacts (via C-terminus) with CHMP7. Interacts (via N-terminus) with tubulin; the interaction causes microtubule bundling and stabilization (in vitro). Phosphorylated; strongly phosphorylated in mitosis compared to G1/S. As to expression, ubiquitously expressed, including bone marrow, brain, kidney, colon, skeletal muscle, thymus, testis and uterus.

It is found in the nucleus inner membrane. Its subcellular location is the nucleus envelope. The protein resides in the cytoplasm. The protein localises to the cytoskeleton. It localises to the spindle. Nuclear lamina-associated inner nuclear membrane protein that is involved in nuclear structure organization, maintenance of nuclear envelope (NE) integrity and NE reformation after mitosis. Plays a role as transmembrane adapter for the endosomal sorting complexes required for transport (ESCRT), and is thereby involved in ESCRT-mediated NE reformation. Promotes ESCRT-mediated NE closure by recruiting CHMP7 and downstream ESCRT-III proteins IST1/CHMP8 and CHMP2A to the reforming NE during anaphase. During nuclear reassembly, condenses into a liquid-like coating around microtubule spindles and coassembles with CHMP7 to form a macromolecular O-ring seal at the confluence between membranes, chromatin, and the spindle to facilitate early nuclear sealing. Plays a role in the organization of heterochromatin associated with the NE and in the maintenance of NE organization under mechanical stress. Required for embryonic development and involved in regulation of several signaling pathways such as MAPK and AKT. Required for myoblast differentiation involving regulation of ERK signaling. Essential for cardiac homeostasis and proper heart function. The chain is LEM domain-containing protein 2 (LEMD2) from Homo sapiens (Human).